The primary structure comprises 302 residues: MASTTDMSTYKLNHTMIRVKDLDKSLKFYTEVFGMKLIDQWVFEENEFSLSFLAFDGPGALNHGVERSKREGILELTYNFGTEKKEGPVYINGNTEPKRGFGHICFTVDNIESACAYLESKGVSFKKKLSDGKMKHIAFALDPDNYWIELVSQSETKPKANISNFRFNHTMVRVKDPEPSIAFYEKLGMKVIDKADHPNGKFTNYFLAYPSDLPRHDREGLLELTHNWGTEKESGPVYHNGNDGDEKGYGHVCISVDNINAACSKFEAEGLPFKKKLTDGRMKDIAFLLDPDNYWVEVIEQK.

VOC domains are found at residues 11–153 and 166–301; these read KLNH…LVSQ and RFNH…VIEQ. A Zn(2+)-binding site is contributed by histidine 14. Arginine 18 provides a ligand contact to substrate. Zn(2+) is bound at residue glutamate 75. Residues asparagine 79, arginine 99, and histidine 103 each coordinate substrate. The Zn(2+) site is built by histidine 103 and glutamate 149. The Proton donor/acceptor role is filled by glutamate 149.

It belongs to the glyoxalase I family. Monomer. Requires Zn(2+) as cofactor. The cofactor is Cu(2+). It depends on Ni(2+) as a cofactor. Mn(2+) serves as cofactor.

The enzyme catalyses (R)-S-lactoylglutathione = methylglyoxal + glutathione. It participates in secondary metabolite metabolism; methylglyoxal degradation; (R)-lactate from methylglyoxal: step 1/2. In terms of biological role, catalyzes the conversion of hemimercaptal, formed from methylglyoxal and glutathione, to S-lactoylglutathione. The protein is Lactoylglutathione lyase (glo1) of Schizosaccharomyces pombe (strain 972 / ATCC 24843) (Fission yeast).